The following is a 221-amino-acid chain: PKHD-type hydroxylase Pro_1271 (221 aa).

The region spanning 80–174 (KVHGVMFSKS…RIVCVGWIQS (95 aa)) is the Fe2OG dioxygenase domain. The Fe cation site is built by histidine 98, aspartate 100, and histidine 155. Residue arginine 165 coordinates 2-oxoglutarate.

Requires Fe(2+) as cofactor. The cofactor is L-ascorbate.

The sequence is that of PKHD-type hydroxylase Pro_1271 from Prochlorococcus marinus (strain SARG / CCMP1375 / SS120).